Consider the following 298-residue polypeptide: DegV domain-containing protein UU535 (298 aa).

Residues 5–287 (FLIMTDSSTT…KGALGIQVIA (283 aa)) form the DegV domain. 2 residues coordinate hexadecanoate: Ser-65 and Ser-96.

May bind long-chain fatty acids, such as palmitate, and may play a role in lipid transport or fatty acid metabolism. This chain is DegV domain-containing protein UU535, found in Ureaplasma parvum serovar 3 (strain ATCC 700970).